Reading from the N-terminus, the 365-residue chain is UPF0324 membrane protein Cj0999c (365 aa).

11 consecutive transmembrane segments (helical) span residues 12–34, 44–63, 83–100, 105–127, 134–153, 163–185, 197–219, 234–256, 269–288, 303–325, and 338–360; these read IVRS…MYLS, HLAA…PWFF, LGIV…LLSV, FLLS…TKIF, SMLV…LALE, GILA…PIAF, AMGV…AEMA, VIIK…YFFA, SITI…LNTY, IISL…LGLQ, and VFGL…TLAF.

This sequence belongs to the UPF0324 family.

The protein resides in the cell membrane. In Campylobacter jejuni subsp. jejuni serotype O:2 (strain ATCC 700819 / NCTC 11168), this protein is UPF0324 membrane protein Cj0999c.